We begin with the raw amino-acid sequence, 232 residues long: Glycerol-3-phosphate acyltransferase (232 aa).

Transmembrane regions (helical) follow at residues 4 to 24 (FLAIITVAYLIGSIPTSIIAG), 56 to 76 (AVTLIDIAKGTIAAVPVVAFF), 90 to 110 (IALNLIAGMSAVIGHVFTVFA), 124 to 144 (MLIGIAPISMLMVIGVFILAI), 147 to 167 (TRYVSVGSILAAIAFPLIIAI), and 191 to 211 (SLDYHLLIFGGIVAAAIIYTH).

This sequence belongs to the PlsY family. In terms of assembly, probably interacts with PlsX.

The protein resides in the cell inner membrane. The enzyme catalyses an acyl phosphate + sn-glycerol 3-phosphate = a 1-acyl-sn-glycero-3-phosphate + phosphate. The protein operates within lipid metabolism; phospholipid metabolism. Its function is as follows. Catalyzes the transfer of an acyl group from acyl-phosphate (acyl-PO(4)) to glycerol-3-phosphate (G3P) to form lysophosphatidic acid (LPA). This enzyme utilizes acyl-phosphate as fatty acyl donor, but not acyl-CoA or acyl-ACP. The polypeptide is Glycerol-3-phosphate acyltransferase (Chlorobaculum parvum (strain DSM 263 / NCIMB 8327) (Chlorobium vibrioforme subsp. thiosulfatophilum)).